We begin with the raw amino-acid sequence, 190 residues long: MGARAQPTPSWAREPLFEKAVTPSDVGKLNRLLVPKQHAEKHFPLRRTSSDASGVLLNFEDGEGKVWRFRYSCWNSSQSYVLTKGWSRFVREKGLRAGDTIVFSGSAYGPDKLLFIDCKKNNTAAATGDEKPITSGEATRVVRLFGMDITGGGGDCRKRERAVEMGQEAFLMKRQCVVHQRTPALGALLL.

Positions 17-121 (FEKAVTPSDV…KLLFIDCKKN (105 aa)) form a DNA-binding region, TF-B3.

Its subcellular location is the nucleus. This Oryza sativa subsp. japonica (Rice) protein is B3 domain-containing protein Os02g0764100.